A 188-amino-acid polypeptide reads, in one-letter code: Large ribosomal subunit protein bL35m (188 aa).

The protein belongs to the bacterial ribosomal protein bL35 family.

Its subcellular location is the mitochondrion. The protein is Large ribosomal subunit protein bL35m (MRPL35) of Bos taurus (Bovine).